Consider the following 76-residue polypeptide: Brevinin-2ISa (76 aa).

The N-terminal stretch at 1-22 is a signal peptide; it reads MFNMKKSLLLLFFLGTISLSLC. A propeptide spans 23–41 (removed in mature form); that stretch reads EEERDADEDDGVEMTEEEV. Cys-70 and Cys-76 are disulfide-bonded.

As to expression, expressed by the skin glands.

Its subcellular location is the secreted. In terms of biological role, has antimicrobial activity against Gram-negative bacterium E.coli ATCC 8739 (MIC=50 ug), against Gram positive bacteria S.aureus ATCC 6538 (MIC=12.5 ug), methicillin-resistant S.aureus ATCC 43300 (MIC=100 ug) and B.subtilis ATCC 6633 (MIC=12.5 ug). Has no activity against fungus C.albicans ATCC 90028. The protein is Brevinin-2ISa of Odorrana ishikawae (Ishikawa's frog).